A 178-amino-acid chain; its full sequence is Mediator of RNA polymerase II transcription subunit 28 (178 aa).

The interval 1-43 is disordered; sequence MAASLGGMFAGQPPGPPPPPPGLPGQASLLQAAPGAPRPSNST. Over residues 13–23 the composition is skewed to pro residues; the sequence is PPGPPPPPPGL. The stretch at 109–145 forms a coiled coil; sequence QVIKEDVSELRSELQRKDALVQKHLTKLRHWQQVLED.

Belongs to the Mediator complex subunit 28 family. Forms a ternary complex with NF2/merlin and GRB2. Binds to actin. Component of the Mediator complex, which is probably composed of MED1, MED4, MED6, MED7, MED8, MED9, MED10, MED11, MED12, MED13, MED13L, MED14, MED15, MED16, MED17, MED18, MED19, MED20, MED21, MED22, MED23, MED24, MED25, MED26, MED27, MED29, MED30, MED31, CCNC, CDK8 and CDC2L6/CDK11. The MED12, MED13, CCNC and CDK8 subunits form a distinct module termed the CDK8 module. Mediator containing the CDK8 module is less active than Mediator lacking this module in supporting transcriptional activation. Individual preparations of the Mediator complex lacking one or more distinct subunits have been variously termed ARC, CRSP, DRIP, PC2, SMCC and TRAP.

Its subcellular location is the nucleus. The protein localises to the cytoplasm. It localises to the membrane. In terms of biological role, may be part of a complex containing NF2/merlin that participates in cellular signaling to the actin cytoskeleton downstream of tyrosine kinase signaling pathways. Component of the Mediator complex, a coactivator involved in the regulated transcription of nearly all RNA polymerase II-dependent genes. Mediator functions as a bridge to convey information from gene-specific regulatory proteins to the basal RNA polymerase II transcription machinery. Mediator is recruited to promoters by direct interactions with regulatory proteins and serves as a scaffold for the assembly of a functional preinitiation complex with RNA polymerase II and the general transcription factors. The polypeptide is Mediator of RNA polymerase II transcription subunit 28 (Med28) (Rattus norvegicus (Rat)).